Consider the following 515-residue polypeptide: Methionine--tRNA ligase (515 aa).

The 'HIGH' region signature appears at 13–23; that stretch reads AYPNGKPHIGH. Residues 300-304 carry the 'KMSKS' region motif; that stretch reads KMSKS. Position 303 (K303) interacts with ATP.

Belongs to the class-I aminoacyl-tRNA synthetase family. MetG type 2B subfamily. As to quaternary structure, monomer.

Its subcellular location is the cytoplasm. It catalyses the reaction tRNA(Met) + L-methionine + ATP = L-methionyl-tRNA(Met) + AMP + diphosphate. Is required not only for elongation of protein synthesis but also for the initiation of all mRNA translation through initiator tRNA(fMet) aminoacylation. This is Methionine--tRNA ligase from Brucella melitensis biotype 1 (strain ATCC 23456 / CCUG 17765 / NCTC 10094 / 16M).